A 706-amino-acid polypeptide reads, in one-letter code: MSLTKIPENVQGAVSIDPWLEPFADVLSERRYLADKWLYDIKHATPDGSEQSLVDFARNAYKTYGLHANQQTKEIVYREWAPNAQRAFLVGEFNNWNEESHEMKHKDEFGVFSITLAPLENGDFAIPHDSKIKVMFVLPDGSKVYRIPAWITRATQPSKETAQKYGPTYEGRFWNPPNSYQFKHQRPKFNLANDSIKIYEAHIGISSPEPKVASYKEFTQNVLPRIKHLGYDAIQLMAIMEHAYYASFGYQVTNFFAISSRYGTPEDLKELIDTAHSMGILVLLDVIHSHASKNSEDGLNMFDGSDHQYFHSLTSGRGEHPLWDSRLFNYGSFEVQRFLLANLAYYIDVYQFDGFRFDGVTSMLYLHHGVGAGGAFSGDYNEYLSRDRSGVDHEALAYLMLANDLVHDLLPESAVTIAEDVSGYPTLCLPRTAGGGGFDYRLAMALPDMWIKLLKTKQDDDWDMGHIVHTLTNRRHGEKVVAYCESHDQALVGDKTLAFWLMDAAMYTDMTVLKEPTLVIDRGIALHKMIRLITHSLGGEAYLNFEGNEFGHPEWLDFPRVGNNDSYHYARRQFNLVDDDLLRYRHLNEFDAAMQNCESKHQWLNTPQAYVSLKHEVDKVIAFERNGHLFVFNFHPTQSFTDYRIGVDVAGTYKIVLNTDRAEFGGHNRIDEAQEFFTTDLEWNNRRNFIQVYIPSRTAIVLTRQM.

(1,4-alpha-D-glucosyl)n contacts are provided by Trp-96 and Lys-133. Asp-358 functions as the Nucleophile in the catalytic mechanism. Glu-419 serves as the catalytic Proton donor.

This sequence belongs to the glycosyl hydrolase 13 family. GlgB subfamily. As to quaternary structure, monomer.

It is found in the cytoplasm. The catalysed reaction is Transfers a segment of a (1-&gt;4)-alpha-D-glucan chain to a primary hydroxy group in a similar glucan chain.. Its pathway is glycan biosynthesis; glycogen biosynthesis. Functionally, glycogen-branching enzyme participates in the glycogen biosynthetic process along with glycogenin and glycogen synthase. Generates alpha-1,6-glucosidic branches from alpha-1,4-linked glucose chains, to increase solubility of the glycogen polymer. The sequence is that of 1,4-alpha-glucan-branching enzyme (GLC3) from Candida glabrata (strain ATCC 2001 / BCRC 20586 / JCM 3761 / NBRC 0622 / NRRL Y-65 / CBS 138) (Yeast).